Reading from the N-terminus, the 397-residue chain is Homocysteine-responsive endoplasmic reticulum-resident ubiquitin-like domain member 2 protein (397 aa).

Residues 10–89 (VTLVIKAPNQ…HMVHLVCASR (80 aa)) form the Ubiquitin-like domain. Disordered stretches follow at residues 87–166 (ASRS…MQGG) and 210–246 (APSPSLSAGPATQPVQPNEPAAPMGPNPAPEDRPANP). Composition is skewed to low complexity over residues 88–123 (SRSPPSSPTSDSHFSTTDSSSSTSDSAGPSLSSTPS) and 210–220 (APSPSLSAGPA). The helical transmembrane segment at 293-313 (FVMVIGAMLLVYLHQAGWFPF) threads the bilayer. The segment at 344 to 373 (DEGIEDDEGDSGEEGPDDPMNPGPHQPGFL) is disordered. The segment covering 345-360 (EGIEDDEGDSGEEGPD) has biased composition (acidic residues).

The protein localises to the membrane. Functionally, could be involved in the unfolded protein response (UPR) pathway. In Danio rerio (Zebrafish), this protein is Homocysteine-responsive endoplasmic reticulum-resident ubiquitin-like domain member 2 protein (herpud2).